Consider the following 323-residue polypeptide: MSKIYEDNSLTIGHTPLVRLNRIGNGRILAKVESRNPSFSVKCRIGANMIWDAEKRGVLKPGVELVEPTSGNTGIALAYVAAARGYKLTLTMPETMSIERRKLLKALGANLVLTEGAKGMKGAIQKAEEIVASDPQKYLLLQQFSNPANPEIHEKTTGPEIWEDTDGQVDVFISGVGTGGTLTGVTRYIKGTKGKTDLITVAVEPTDSPVIAQALAGEEIKPGPHKIQGIGAGFIPGNLDLKLIDKVVGITNEEAISTARRLMEEEGILAGISSGAAVAAALKLQEDESFTNKNIVVILPSSGERYLSTALFADLFTEKELQQ.

2 residues coordinate hydrogen sulfide: Asn8 and Arg35. Residue Lys42 is modified to N6-(pyridoxal phosphate)lysine. Residues Asn72 and 177 to 181 (GTGGT) contribute to the pyridoxal 5'-phosphate site. Hydrogen sulfide is bound at residue Leu269. Residue Ser273 participates in pyridoxal 5'-phosphate binding.

The protein belongs to the cysteine synthase/cystathionine beta-synthase family. As to quaternary structure, homodimer. The cofactor is pyridoxal 5'-phosphate.

The enzyme catalyses O-acetyl-L-serine + hydrogen sulfide = L-cysteine + acetate. It participates in amino-acid biosynthesis; L-cysteine biosynthesis; L-cysteine from L-serine: step 2/2. Two cysteine synthase enzymes are found. Both catalyze the same reaction. Cysteine synthase B can also use thiosulfate in place of sulfide to give cysteine thiosulfonate as a product. In Salmonella typhi, this protein is Cysteine synthase A (cysK).